Here is a 235-residue protein sequence, read N- to C-terminus: Phosphoribosylaminoimidazole-succinocarboxamide synthase (235 aa).

This sequence belongs to the SAICAR synthetase family.

The catalysed reaction is 5-amino-1-(5-phospho-D-ribosyl)imidazole-4-carboxylate + L-aspartate + ATP = (2S)-2-[5-amino-1-(5-phospho-beta-D-ribosyl)imidazole-4-carboxamido]succinate + ADP + phosphate + 2 H(+). It participates in purine metabolism; IMP biosynthesis via de novo pathway; 5-amino-1-(5-phospho-D-ribosyl)imidazole-4-carboxamide from 5-amino-1-(5-phospho-D-ribosyl)imidazole-4-carboxylate: step 1/2. The polypeptide is Phosphoribosylaminoimidazole-succinocarboxamide synthase (Prosthecochloris aestuarii (strain DSM 271 / SK 413)).